Reading from the N-terminus, the 408-residue chain is UPF0761 membrane protein NMCC_0461 (408 aa).

Helical transmembrane passes span 43–63 (LLALVPVLTVMVAVASIFPVF), 100–120 (LTAIGSVMLVVTSLMLIRTID), 139–159 (FLVYWALLTFGPLSLGVGISF), 176–196 (WSGALRTAATLTFMTLLLWGL), 210–230 (AFVGALATAFCLETARSLFTW), and 248–268 (VPFFLLWLNLLWTLVLGGAVL).

This sequence belongs to the UPF0761 family.

The protein localises to the cell inner membrane. The protein is UPF0761 membrane protein NMCC_0461 of Neisseria meningitidis serogroup C (strain 053442).